The following is a 388-amino-acid chain: Chorismate synthase (388 aa).

Residues arginine 39 and arginine 45 each coordinate NADP(+). FMN contacts are provided by residues 132–134, 251–252, glycine 296, 311–315, and arginine 337; these read RSS, NA, and KPIPT.

This sequence belongs to the chorismate synthase family. As to quaternary structure, homotetramer. FMNH2 serves as cofactor.

It catalyses the reaction 5-O-(1-carboxyvinyl)-3-phosphoshikimate = chorismate + phosphate. It participates in metabolic intermediate biosynthesis; chorismate biosynthesis; chorismate from D-erythrose 4-phosphate and phosphoenolpyruvate: step 7/7. Functionally, catalyzes the anti-1,4-elimination of the C-3 phosphate and the C-6 proR hydrogen from 5-enolpyruvylshikimate-3-phosphate (EPSP) to yield chorismate, which is the branch point compound that serves as the starting substrate for the three terminal pathways of aromatic amino acid biosynthesis. This reaction introduces a second double bond into the aromatic ring system. In Staphylococcus aureus (strain Mu50 / ATCC 700699), this protein is Chorismate synthase.